The following is a 389-amino-acid chain: Type III polyketide synthase 21 (389 aa).

Residue cysteine 170 is the Nucleophile of the active site.

It belongs to the thiolase-like superfamily. Chalcone/stilbene synthases family. Expressed in anthers. Expressed in young and adult flowers.

In terms of biological role, plant type III polyketide synthases (PKSs) that catalyzes the condensation of fatty acyl-CoA with malonyl-CoA to generate triketide and tetraketide alpha-pyrones, the main components of pollen exine and potential sporopollenin precursors. This chain is Type III polyketide synthase 21 (PKS21), found in Oryza sativa subsp. japonica (Rice).